The sequence spans 623 residues: Interferon-induced GTP-binding protein Mx3 (623 aa).

A Dynamin-type G domain is found at 31–304 (DLALPAIAVI…LVHHIEKSLP (274 aa)). Residues 41 to 48 (GDQSSGKS) are G1 motif. A GTP-binding site is contributed by 41 to 48 (GDQSSGKS). The segment at 66–68 (VTR) is G2 motif. The tract at residues 142–145 (DLPG) is G3 motif. GTP contacts are provided by residues 142–146 (DLPGI) and 211–214 (TKPD). Residues 211–214 (TKPD) form a G4 motif region. The G5 motif stretch occupies residues 243-246 (KCRG). In terms of domain architecture, GED spans 537–623 (LQEMMLHLKS…MKARSYLVEF (87 aa)).

The protein belongs to the TRAFAC class dynamin-like GTPase superfamily. Dynamin/Fzo/YdjA family.

It is found in the cytoplasm. In terms of biological role, does not inhibit strain RB-1 of the fish pathogen, infectious hematopoietic necrosis virus (IHNV). This chain is Interferon-induced GTP-binding protein Mx3, found in Oncorhynchus mykiss (Rainbow trout).